Here is a 197-residue protein sequence, read N- to C-terminus: Recombination protein RecR (197 aa).

Residues 56–71 form a C4-type zinc finger; sequence CRLCNNFSEAEVCEVC. In terms of domain architecture, Toprim spans 79-174; that stretch reads RQLAVVEMPA…KVSRLARGVP (96 aa).

Belongs to the RecR family.

May play a role in DNA repair. It seems to be involved in an RecBC-independent recombinational process of DNA repair. It may act with RecF and RecO. This is Recombination protein RecR from Thiobacillus denitrificans (strain ATCC 25259 / T1).